Here is a 415-residue protein sequence, read N- to C-terminus: Serine/threonine transporter SstT (415 aa).

Helical transmembrane passes span 23 to 43 (ILVG…AAIA), 47 to 67 (LGTL…LMLV), 85 to 105 (ILWL…LFSF), 144 to 164 (ALLK…GFAL), 181 to 201 (AVTF…FGLV), 220 to 240 (LMVL…LIVF), 303 to 323 (GAAI…GIAV), and 333 to 353 (VVAS…LLLI).

It belongs to the dicarboxylate/amino acid:cation symporter (DAACS) (TC 2.A.23) family.

It is found in the cell inner membrane. The catalysed reaction is L-serine(in) + Na(+)(in) = L-serine(out) + Na(+)(out). The enzyme catalyses L-threonine(in) + Na(+)(in) = L-threonine(out) + Na(+)(out). Involved in the import of serine and threonine into the cell, with the concomitant import of sodium (symport system). The polypeptide is Serine/threonine transporter SstT (Cronobacter sakazakii (strain ATCC BAA-894) (Enterobacter sakazakii)).